Reading from the N-terminus, the 323-residue chain is Fructose-bisphosphate aldolase (323 aa).

A beta-D-fructose 1,6-bisphosphate-binding site is contributed by Ser-50. The active-site Proton donor is the Asp-83. Zn(2+)-binding residues include His-84 and His-178. His-178, Gly-179, and Lys-182 together coordinate beta-D-fructose 1,6-bisphosphate. His-210 provides a ligand contact to Zn(2+). Residues Gly-211, Ser-213, Asn-253, Asp-255, Ser-256, Arg-259, and Arg-280 each coordinate beta-D-fructose 1,6-bisphosphate.

Belongs to the class II fructose-bisphosphate aldolase family. In terms of assembly, homodimer. Requires Zn(2+) as cofactor.

It carries out the reaction beta-D-fructose 1,6-bisphosphate = D-glyceraldehyde 3-phosphate + dihydroxyacetone phosphate. It functions in the pathway carbohydrate degradation; glycolysis; D-glyceraldehyde 3-phosphate and glycerone phosphate from D-glucose: step 4/4. Functionally, plays a key role in glycolysis by catalyzing the cleavage of fructose 1,6-bisphosphate into dihydroxyacetone phosphate and glyceraldehyde 3-phosphate. Does not cleave D-tagatose-1,6-bisphosphate. The protein is Fructose-bisphosphate aldolase of Giardia intestinalis (strain ATCC 50803 / WB clone C6) (Giardia lamblia).